The following is a 69-amino-acid chain: MAKILKFVFAIILFFSLFLLSMEAEPLLPCETDGDCPLKPIIETTPMISLHYMCIDKECVLFREVLQTP.

Residues 1–24 form the signal peptide; that stretch reads MAKILKFVFAIILFFSLFLLSMEA.

The polypeptide is Nodulin-3 (ENOD3) (Pisum sativum (Garden pea)).